A 204-amino-acid polypeptide reads, in one-letter code: Large ribosomal subunit protein eL15 (204 aa).

Belongs to the eukaryotic ribosomal protein eL15 family. As to quaternary structure, component of the large ribosomal subunit.

It is found in the cytoplasm. Its function is as follows. Component of the large ribosomal subunit. The ribosome is a large ribonucleoprotein complex responsible for the synthesis of proteins in the cell. The chain is Large ribosomal subunit protein eL15 (rpl15) from Paramisgurnus dabryanus.